Reading from the N-terminus, the 560-residue chain is Dihydroxy-acid dehydratase (560 aa).

[2Fe-2S] cluster is bound at residue Cys-50. Position 82 (Asp-82) interacts with Mg(2+). A [2Fe-2S] cluster-binding site is contributed by Cys-123. Mg(2+) is bound by residues Asp-124 and Lys-125. Lys-125 is subject to N6-carboxylysine. Position 195 (Cys-195) interacts with [2Fe-2S] cluster. Residue Glu-447 coordinates Mg(2+). Residue Ser-473 is the Proton acceptor of the active site.

The protein belongs to the IlvD/Edd family. In terms of assembly, homodimer. The cofactor is [2Fe-2S] cluster. Requires Mg(2+) as cofactor.

The catalysed reaction is (2R)-2,3-dihydroxy-3-methylbutanoate = 3-methyl-2-oxobutanoate + H2O. The enzyme catalyses (2R,3R)-2,3-dihydroxy-3-methylpentanoate = (S)-3-methyl-2-oxopentanoate + H2O. Its pathway is amino-acid biosynthesis; L-isoleucine biosynthesis; L-isoleucine from 2-oxobutanoate: step 3/4. It functions in the pathway amino-acid biosynthesis; L-valine biosynthesis; L-valine from pyruvate: step 3/4. In terms of biological role, functions in the biosynthesis of branched-chain amino acids. Catalyzes the dehydration of (2R,3R)-2,3-dihydroxy-3-methylpentanoate (2,3-dihydroxy-3-methylvalerate) into 2-oxo-3-methylpentanoate (2-oxo-3-methylvalerate) and of (2R)-2,3-dihydroxy-3-methylbutanoate (2,3-dihydroxyisovalerate) into 2-oxo-3-methylbutanoate (2-oxoisovalerate), the penultimate precursor to L-isoleucine and L-valine, respectively. The protein is Dihydroxy-acid dehydratase of Thermosynechococcus vestitus (strain NIES-2133 / IAM M-273 / BP-1).